A 42-amino-acid polypeptide reads, in one-letter code: Thymosin beta-10 (42 aa).

Composition is skewed to basic and acidic residues over residues 1–25 (MADKPDMGEINSFDKAKLKKTETQE) and 33–42 (ETIEQEKQAK). Positions 1–42 (MADKPDMGEINSFDKAKLKKTETQEKNTLPTKETIEQEKQAK) are disordered. N-acetylalanine is present on Ala2. Lys4 carries the post-translational modification N6-acetyllysine. Position 12 is a phosphoserine (Ser12). Lys15 is modified (N6-acetyllysine). Residues Thr21, Thr23, and Thr34 each carry the phosphothreonine modification. Lys39 carries the post-translational modification N6-acetyllysine.

Belongs to the thymosin beta family.

The protein localises to the cytoplasm. It is found in the cytoskeleton. Its function is as follows. Plays an important role in the organization of the cytoskeleton. Binds to and sequesters actin monomers (G actin) and therefore inhibits actin polymerization. This is Thymosin beta-10 (TMSB10) from Sus scrofa (Pig).